A 314-amino-acid chain; its full sequence is L-lactate dehydrogenase (314 aa).

Residues valine 17, aspartate 38, lysine 43, tyrosine 69, and 83–84 (GA) contribute to the NAD(+) site. Residues glutamine 86 and arginine 92 each contribute to the substrate site. Residues serine 105, 122 to 124 (ASN), and serine 147 each bind NAD(+). 124–127 (NPVD) lines the substrate pocket. Residue 152–155 (DSAR) coordinates substrate. 2 residues coordinate beta-D-fructose 1,6-bisphosphate: arginine 157 and histidine 172. Residue histidine 179 is the Proton acceptor of the active site. Residue tyrosine 223 is modified to Phosphotyrosine. Residue threonine 232 participates in substrate binding.

Belongs to the LDH/MDH superfamily. LDH family. As to quaternary structure, homotetramer.

The protein resides in the cytoplasm. It carries out the reaction (S)-lactate + NAD(+) = pyruvate + NADH + H(+). It participates in fermentation; pyruvate fermentation to lactate; (S)-lactate from pyruvate: step 1/1. Allosterically activated by fructose 1,6-bisphosphate (FBP). In terms of biological role, catalyzes the conversion of lactate to pyruvate. This Corynebacterium glutamicum (strain ATCC 13032 / DSM 20300 / JCM 1318 / BCRC 11384 / CCUG 27702 / LMG 3730 / NBRC 12168 / NCIMB 10025 / NRRL B-2784 / 534) protein is L-lactate dehydrogenase.